A 282-amino-acid chain; its full sequence is 4-diphosphocytidyl-2-C-methyl-D-erythritol kinase (282 aa).

The active site involves lysine 8. Residue 91–101 (PVAAGLAGGST) participates in ATP binding. Residue aspartate 133 is part of the active site.

It belongs to the GHMP kinase family. IspE subfamily.

The enzyme catalyses 4-CDP-2-C-methyl-D-erythritol + ATP = 4-CDP-2-C-methyl-D-erythritol 2-phosphate + ADP + H(+). The protein operates within isoprenoid biosynthesis; isopentenyl diphosphate biosynthesis via DXP pathway; isopentenyl diphosphate from 1-deoxy-D-xylulose 5-phosphate: step 3/6. Catalyzes the phosphorylation of the position 2 hydroxy group of 4-diphosphocytidyl-2C-methyl-D-erythritol. In Symbiobacterium thermophilum (strain DSM 24528 / JCM 14929 / IAM 14863 / T), this protein is 4-diphosphocytidyl-2-C-methyl-D-erythritol kinase.